The following is a 469-amino-acid chain: Ribosomal protein uS12 methylthiotransferase RimO (469 aa).

In terms of domain architecture, MTTase N-terminal spans 3–119; sequence TRVYMHTLGC…VARIVSDAQA (117 aa). The [4Fe-4S] cluster site is built by Cys12, Cys48, Cys82, Cys154, Cys158, and Cys161. Residues 140-370 form the Radical SAM core domain; it reads SLPSHTAYLK…MAVQQAISRA (231 aa). A TRAM domain is found at 373–441; it reads QAMIGRRVEV…EYDLVGRVVA (69 aa). Residues 444-469 are disordered; that stretch reads PSRAARPLPAAPRAAPARKGGLNVLR. Residues 447 to 461 show a composition bias toward low complexity; it reads AARPLPAAPRAAPAR.

The protein belongs to the methylthiotransferase family. RimO subfamily. [4Fe-4S] cluster serves as cofactor.

It is found in the cytoplasm. It carries out the reaction L-aspartate(89)-[ribosomal protein uS12]-hydrogen + (sulfur carrier)-SH + AH2 + 2 S-adenosyl-L-methionine = 3-methylsulfanyl-L-aspartate(89)-[ribosomal protein uS12]-hydrogen + (sulfur carrier)-H + 5'-deoxyadenosine + L-methionine + A + S-adenosyl-L-homocysteine + 2 H(+). Functionally, catalyzes the methylthiolation of an aspartic acid residue of ribosomal protein uS12. The sequence is that of Ribosomal protein uS12 methylthiotransferase RimO from Anaeromyxobacter sp. (strain K).